Reading from the N-terminus, the 550-residue chain is MARKGNPISVRLDLNRSSDSSWFSDYYYGKSVYQDVNLRSYFGSIRPPTRLTFGFRLGRCIILHFPKRTFIHFFLPRRPRRLKRGKKSRPGKEKARWWEFGKVGPIGCLHSNDDTEEERNEVGGRGAGKRVESIRLDDREKQNEIRIWPKKKQGYGYHDRSPSIKKNLSKSLRVSGAFKHPKYAGVLNDIAFLIENDDSFRKTKLFKFFFPKKSRSDGPTSHLLKRTPPAVRPSLNYSVMQYYLNTKNQMHFDPLVVLNHFVAPGVAEPSTMGGANRQGRSNELRIRSRIAFFVESSTSEKKSLAEDKKGLPHFIRQENDLRFAGRTKTTISLFPFFGATFFFPRDGVGVYKHLFFEDAREQLLGQLRIKCWKLMGKDKVMELIEKFIDLGGIGELIKGIEIMIEIILRNRRIPYGYNSYLNEVKKMRSLLSNRTKTNTIIESVKIKSVYQSASPIAQDISFQPRNKRRSFRSIFSQIVKDIPLVMKKGVEGIRICCSGRSKGAEIARTECGKYGKTSRNVFNQKIDYAPAEVSTRYGILGVKVWISYSK.

A disordered region spans residues 112 to 133; it reads NDDTEEERNEVGGRGAGKRVES.

It belongs to the universal ribosomal protein uS3 family.

Its subcellular location is the mitochondrion. In Oenothera berteroana (Bertero's evening primrose), this protein is Small ribosomal subunit protein uS3m (RPS3).